A 195-amino-acid polypeptide reads, in one-letter code: MSVHIELPRELRPLMKKPLGILYRGKGRDTIEKFAGELSSPTKLISVGDVTTFHLLEAGIIPDICIVDDRTKRKPVSSDVSVRNRDKVYEEVSVDNPAGIITDELIRTLCEAFASEKLLRIFVRGEEDLATLPVILLAPPGSVVLYGQPDEGVVFVEVTEKKKEEIRALFEKLISKNQNNELDKIRRILDGHKDN.

5 residues coordinate GTP: D49, V50, D68, E127, and D150.

This sequence belongs to the GTP-dependent DPCK family.

It carries out the reaction 3'-dephospho-CoA + GTP = GDP + CoA + H(+). Its pathway is cofactor biosynthesis; coenzyme A biosynthesis. Its function is as follows. Catalyzes the GTP-dependent phosphorylation of the 3'-hydroxyl group of dephosphocoenzyme A to form coenzyme A (CoA). This Methanosarcina mazei (strain ATCC BAA-159 / DSM 3647 / Goe1 / Go1 / JCM 11833 / OCM 88) (Methanosarcina frisia) protein is GTP-dependent dephospho-CoA kinase.